A 131-amino-acid polypeptide reads, in one-letter code: D-ribose pyranase (131 aa).

Catalysis depends on histidine 20, which acts as the Proton donor. Substrate contacts are provided by residues aspartate 28, histidine 98, and 120–122 (YAN).

This sequence belongs to the RbsD / FucU family. RbsD subfamily. In terms of assembly, homodecamer.

Its subcellular location is the cytoplasm. It carries out the reaction beta-D-ribopyranose = beta-D-ribofuranose. Its pathway is carbohydrate metabolism; D-ribose degradation; D-ribose 5-phosphate from beta-D-ribopyranose: step 1/2. Functionally, catalyzes the interconversion of beta-pyran and beta-furan forms of D-ribose. The sequence is that of D-ribose pyranase from Bacillus cereus (strain 03BB102).